Here is an 83-residue protein sequence, read N- to C-terminus: UPF0346 protein M28_Spy0369 (83 aa).

Belongs to the UPF0346 family.

The chain is UPF0346 protein M28_Spy0369 from Streptococcus pyogenes serotype M28 (strain MGAS6180).